A 405-amino-acid chain; its full sequence is Glycosylated lysosomal membrane protein A (405 aa).

The N-terminal stretch at 1-25 (MGCTRGWRLLLLLGLVCVGALQGRG) is a signal peptide. Residues 26 to 365 (QEESREVSLQ…YGEPPRDSFS (340 aa)) are Lumenal-facing. 15 N-linked (GlcNAc...) asparagine glycosylation sites follow: N55, N86, N125, N129, N143, N153, N157, N164, N169, N179, N206, N222, N267, N304, and N331. A helical membrane pass occupies residues 366–386 (ILVICIMAVALGTPLLLLIVG). At 387-405 (TLVVTALRHKVYSNYEPIN) the chain is on the cytoplasmic side. A Lysosomal targeting motif motif is present at residues 401-405 (YEPIN).

Belongs to the GLMP family. Interacts (via lumenal domain) with lysosomal protein MFSD1; the interaction starts while both proteins are still in the endoplasmic reticulum and is required for stabilization of MFSD1 in lysosomes but has no direct effect on its targeting to lysosomes or transporter activity.

Its subcellular location is the lysosome membrane. Required to protect lysosomal transporter MFSD1 from lysosomal proteolysis and for MFSD1 lysosomal localization. The polypeptide is Glycosylated lysosomal membrane protein A (glmp-a) (Xenopus laevis (African clawed frog)).